The following is a 222-amino-acid chain: Prolactin-2C5 (222 aa).

The signal sequence occupies residues 1-29 (MLPSLIQPCSWILLLLLVNSSLLWKNVAS). C33 and C40 are oxidised to a cystine. N57 carries N-linked (GlcNAc...) asparagine glycosylation. Cystine bridges form between C87/C197 and C214/C222.

Belongs to the somatotropin/prolactin family. In terms of processing, N-glycosylated and sialylated. Expressed in placenta (at protein level). Expressed in the tail hair follicle, with highest expression detected in the keratinocytes of the outer root sheath. Expressed in ear skin with lesser amounts in small intestine. Not detected in brain at 18 dpc, postnatal day 25 or postnatal day 55.

Its subcellular location is the secreted. The polypeptide is Prolactin-2C5 (Mus musculus (Mouse)).